We begin with the raw amino-acid sequence, 278 residues long: Non-haem bromoperoxidase BPO-A2 (278 aa).

Positions 26-264 constitute an AB hydrolase-1 domain; sequence PVVLIHGFPL…GAPHGLLWTH (239 aa). Active-site residues include Ser-99, Asp-229, and His-258.

It belongs to the AB hydrolase superfamily. Bacterial non-heme haloperoxidase / perhydrolase family. In terms of assembly, homotrimer.

In terms of biological role, may be a chlorinating enzyme involved in 7-chlorotetracycline biosynthesis. The chain is Non-haem bromoperoxidase BPO-A2 (bpoA2) from Kitasatospora aureofaciens (Streptomyces aureofaciens).